A 2283-amino-acid chain; its full sequence is DNA polymerase epsilon catalytic subunit A (2283 aa).

The interval 1–32 is disordered; it reads MVLRNSGRRHPEPGADGEGSRDDGPSSSVSAL. The segment covering 9–24 has biased composition (basic and acidic residues); the sequence is RHPEPGADGEGSRDDG. 3 positions are modified to phosphoserine: serine 1184, serine 1296, and serine 1316. Disordered regions lie at residues 1935-1968 and 2014-2041; these read GQVK…GESE and HSAP…TGSL. Basic and acidic residues predominate over residues 1936 to 1946; the sequence is QVKEQDSQARE. Over residues 1947–1968 the composition is skewed to acidic residues; it reads ETDEEEEDKEKDEEEEGMGESE. Residues 2028–2037 are compositionally biased toward polar residues; the sequence is SQFSQESEGA. Positions 2155, 2158, 2184, and 2187 each coordinate Zn(2+). The CysA-type zinc-finger motif lies at 2155-2187; it reads CHSCNFCRDLDLCKDSSFSQDGAILPQWLCSNC. [4Fe-4S] cluster-binding residues include cysteine 2218, cysteine 2221, cysteine 2233, and cysteine 2235. The CysB motif motif lies at 2218–2235; sequence CLKCRGMKETHMPVYCSC.

Belongs to the DNA polymerase type-B family. In terms of assembly, component of the DNA polymerase epsilon complex consisting of four subunits: the catalytic subunit POLE and the accessory subunits POLE2, POLE3 and POLE4. Interacts with RAD17 and TOPBP1. [4Fe-4S] cluster is required as a cofactor.

It is found in the nucleus. It carries out the reaction DNA(n) + a 2'-deoxyribonucleoside 5'-triphosphate = DNA(n+1) + diphosphate. Functionally, catalytic component of the DNA polymerase epsilon complex. Participates in chromosomal DNA replication. Required during synthesis of the leading DNA strands at the replication fork and binds at/or near replication origins and moves along DNA with the replication fork. Has 3'-5' proofreading exonuclease activity that corrects errors arising during DNA replication. It is also involved in DNA synthesis during DNA repair. This chain is DNA polymerase epsilon catalytic subunit A (Pole), found in Mus musculus (Mouse).